The sequence spans 2144 residues: HEAT repeat-containing protein 1 (2144 aa).

N-acetylmethionine is present on M1. Position 2 is an N-acetylthreonine; in HEAT repeat-containing protein 1, N-terminally processed (T2). At S516 the chain carries Phosphoserine. One copy of the HEAT 1 repeat lies at 913–951 (ASISSPVVTSLLINLGSPVKEVRRAAIQCLQALSGVASP). Residues 1170 to 1191 (KAKPLGTVQQKRRQKMQQKKSQ) are disordered. S1190 is modified (phosphoserine). An HEAT 2 repeat occupies 1347 to 1385 (NKTVKMVIPALIQSDSGDSIEVSRNVEEIVVKIISVFVD). S1492 carries the phosphoserine modification. 3 HEAT repeats span residues 1594–1632 (LLPT…QNIS), 1730–1770 (IPQL…VVET), and 2100–2138 (IVLL…VLGE).

It belongs to the HEATR1/UTP10 family. Part of the small subunit (SSU) processome, composed of more than 70 proteins and the RNA chaperone small nucleolar RNA (snoRNA) U3. Interacts with MYC; the interaction is required for localization of MYC to the nucleolus.

The protein localises to the nucleus. It is found in the nucleolus. Ribosome biogenesis factor; required for recruitment of Myc to nucleoli. Involved in nucleolar processing of pre-18S ribosomal RNA. Required for optimal pre-ribosomal RNA transcription by RNA polymerase I. Part of the small subunit (SSU) processome, first precursor of the small eukaryotic ribosomal subunit. During the assembly of the SSU processome in the nucleolus, many ribosome biogenesis factors, an RNA chaperone and ribosomal proteins associate with the nascent pre-rRNA and work in concert to generate RNA folding, modifications, rearrangements and cleavage as well as targeted degradation of pre-ribosomal RNA by the RNA exosome. Involved in neuronal-lineage cell proliferation. The sequence is that of HEAT repeat-containing protein 1 from Homo sapiens (Human).